The chain runs to 837 residues: Striatin-interacting protein 1 (837 aa).

Met-1 is modified (N-acetylmethionine). 2 disordered regions span residues 1-66 (MEPA…SESP) and 333-423 (AASP…KGLP). Over residues 18 to 35 (PQPPPPPPPATAQPPPGA) the composition is skewed to pro residues. Positions 47 to 60 (KAREFNRNQRKDSE) are enriched in basic and acidic residues. A phosphoserine mark is found at Ser-59, Ser-335, and Ser-339. Basic and acidic residues predominate over residues 356–377 (KALIKQDNLDAFNERDPYKADD). The span at 378 to 391 (SREEEEENDDDNSL) shows a compositional bias: acidic residues. Residue Ser-788 is modified to Phosphoserine. A required for STRIPAK core complex formation region spans residues 796 to 837 (DNCLQSVLGQRVDLPEDFQMNYDLWLEREVFSKPISWEELLQ).

It belongs to the STRIP family. In terms of assembly, part of the core of STRIPAK complexes composed of PP2A catalytic and scaffolding subunits, the striatins (PP2A regulatory subunits), the striatin-associated proteins MOB4, STRIP1 and STRIP2, PDCD10 and members of the STE20 kinases, such as STK24 and STK26. The STRIPAK complex can be extended by adapter proteins such as SLMAP:SIKE1, CTTNBP2 or CTTNBP2NL. Interacts with CDC42BPB. Interacts with CTTNBP2NL.

The protein localises to the cytoplasm. In terms of biological role, plays a role in the regulation of cell morphology and cytoskeletal organization. Required in the cortical actin filament dynamics and cell shape. Part of the striatin-interacting phosphatase and kinase (STRIPAK) complexes. STRIPAK complexes have critical roles in protein (de)phosphorylation and are regulators of multiple signaling pathways including Hippo, MAPK, nuclear receptor and cytoskeleton remodeling. Different types of STRIPAK complexes are involved in a variety of biological processes such as cell growth, differentiation, apoptosis, metabolism and immune regulation. This chain is Striatin-interacting protein 1 (STRIP1), found in Macaca fascicularis (Crab-eating macaque).